A 504-amino-acid polypeptide reads, in one-letter code: L-carnitine/gamma-butyrobetaine antiporter (504 aa).

12 helical membrane passes run 10–30, 51–71, 92–112, 143–163, 195–215, 231–251, 263–283, 316–336, 347–367, 398–418, 446–466, and 475–495; these read IEPKVFFPPLIIVGILCWLTV, WGWAFEWYMVVMLFGWFWLVF, IFMMFASCTSAAVLFWGSIEI, GPLPWATYSFLSVAFAYFFFV, FYLVALIFAMGTSLGLATPLV, LDAIIITCWIILHAICVACGL, SYLSFLMLGWVFIVSGASFIM, WTVFYWAWWVIYAIQMSIFLA, LCFGMVMGLTASTWILWTVLG, WAALPLSTATMWGFFILCFIA, LLVRIGWSILVGIIGIVLLAL, and AIIAGGCPLFFVNIMVTLSFI.

It belongs to the BCCT transporter (TC 2.A.15) family. CaiT subfamily. In terms of assembly, homotrimer.

Its subcellular location is the cell inner membrane. The catalysed reaction is 4-(trimethylamino)butanoate(in) + (R)-carnitine(out) = 4-(trimethylamino)butanoate(out) + (R)-carnitine(in). Its pathway is amine and polyamine metabolism; carnitine metabolism. Its function is as follows. Catalyzes the exchange of L-carnitine for gamma-butyrobetaine. The polypeptide is L-carnitine/gamma-butyrobetaine antiporter (Shigella flexneri serotype 5b (strain 8401)).